Consider the following 182-residue polypeptide: Large ribosomal subunit protein uL5 (182 aa).

Belongs to the universal ribosomal protein uL5 family. As to quaternary structure, part of the 50S ribosomal subunit; part of the 5S rRNA/L5/L18/L25 subcomplex. Contacts the 5S rRNA and the P site tRNA. Forms a bridge to the 30S subunit in the 70S ribosome.

Its function is as follows. This is one of the proteins that bind and probably mediate the attachment of the 5S RNA into the large ribosomal subunit, where it forms part of the central protuberance. In the 70S ribosome it contacts protein S13 of the 30S subunit (bridge B1b), connecting the 2 subunits; this bridge is implicated in subunit movement. Contacts the P site tRNA; the 5S rRNA and some of its associated proteins might help stabilize positioning of ribosome-bound tRNAs. This is Large ribosomal subunit protein uL5 from Coxiella burnetii (strain CbuG_Q212) (Coxiella burnetii (strain Q212)).